The following is a 550-amino-acid chain: M-phase inducer phosphatase 1-B (550 aa).

2 disordered regions span residues 76-98 (NLGDETAPLPTESPDRISSGKVE) and 285-335 (SPSM…QRRG). The segment covering 290 to 310 (EKLDRPMLKRPVRPLDSETPV) has biased composition (basic and acidic residues). The span at 322 to 335 (LQPQEENFQPQRRG) shows a compositional bias: polar residues. A Rhodanese domain is found at 401–508 (LVEKIFIIDC…FFPEYKELCE (108 aa)). The active site involves C457.

It belongs to the MPI phosphatase family.

The catalysed reaction is O-phospho-L-tyrosyl-[protein] + H2O = L-tyrosyl-[protein] + phosphate. In terms of biological role, tyrosine protein phosphatase which functions as a dosage-dependent inducer of mitotic progression. Directly dephosphorylates CDK1 and stimulates its kinase activity. The chain is M-phase inducer phosphatase 1-B (cdc25-1-b) from Xenopus laevis (African clawed frog).